We begin with the raw amino-acid sequence, 142 residues long: Large ribosomal subunit protein uL11 (142 aa).

It belongs to the universal ribosomal protein uL11 family. In terms of assembly, part of the ribosomal stalk of the 50S ribosomal subunit. Interacts with L10 and the large rRNA to form the base of the stalk. L10 forms an elongated spine to which L12 dimers bind in a sequential fashion forming a multimeric L10(L12)X complex. Post-translationally, one or more lysine residues are methylated.

Forms part of the ribosomal stalk which helps the ribosome interact with GTP-bound translation factors. In Shewanella sediminis (strain HAW-EB3), this protein is Large ribosomal subunit protein uL11.